Reading from the N-terminus, the 887-residue chain is Transportin-2 (887 aa).

20 HEAT repeats span residues 9 to 36 (GLQQ…DKLK), 41 to 79 (FPDF…AHYQ), 88 to 121 (FIKQ…KGEL), 127 to 164 (LLPQ…LDSD), 171 to 201 (NIMI…QFIM), 214 to 241 (FIEH…VMLL), 253 to 280 (HSII…FWLT), 296 to 386 (VQLI…LANV), 394 to 422 (HLLP…GAIA), 434 to 461 (PELI…TLSR), 475 to 508 (LKPL…EEEA), 516 to 549 (LSYI…ADSV), 557 to 595 (EYIQ…TALQ), 603 to 654 (EPVY…GLGG), 665 to 696 (IMTL…KACF), 704 to 737 (AEFM…MQMG), 745 to 780 (QMVL…YVCP), 788 to 821 (QQFI…IGVN), 830 to 861 (IFFC…KDQV), and 864 to 884 (ENWQ…LAAF). The Importin N-terminal domain maps to 31–99 (VQDKLKQLNQ…KQECLNNIGD (69 aa)). A disordered region spans residues 344-363 (TLTHEAERPDSSEDAEDDDD). K852 is subject to N6-acetyllysine.

It belongs to the importin beta family. Importin beta-2 subfamily.

It localises to the cytoplasm. The protein resides in the nucleus. Probably functions in nuclear protein import as nuclear transport receptor. Serves as receptor for nuclear localization signals (NLS) in cargo substrates. Is thought to mediate docking of the importin/substrate complex to the nuclear pore complex (NPC) through binding to nucleoporin and the complex is subsequently translocated through the pore by an energy requiring, Ran-dependent mechanism. At the nucleoplasmic side of the NPC, Ran binds to the importin, the importin/substrate complex dissociates and importin is re-exported from the nucleus to the cytoplasm where GTP hydrolysis releases Ran. The directionality of nuclear import is thought to be conferred by an asymmetric distribution of the GTP- and GDP-bound forms of Ran between the cytoplasm and nucleus. The chain is Transportin-2 (Tnpo2) from Mus musculus (Mouse).